The following is a 690-amino-acid chain: Proprotein convertase subtilisin/kexin type 9 (690 aa).

A signal peptide spans 1 to 28 (MGTVRSRRLWWPLPLLLLLLLGPAGARA). A propeptide spanning residues 29–150 (QEDDDGDYEE…IEEDSYVFAQ (122 aa)) is cleaved from the precursor. Tyrosine 36 carries the sulfotyrosine modification. Serine 45 carries the phosphoserine modification. In terms of domain architecture, Inhibitor I9 spans 75-147 (TYVVVLKEET…VDYIEEDSYV (73 aa)). Residues 153–459 (PWNLERITPA…GWQLFCRTVW (307 aa)) enclose the Peptidase S8 domain. Residues aspartate 184 and histidine 224 each act as charge relay system in the active site. 2 disulfides stabilise this stretch: cysteine 221–cysteine 253 and cysteine 321–cysteine 356. The active-site Charge relay system is serine 384. A C-terminal domain region spans residues 448–690 (GAGWQLFCRT…HLAQASQELQ (243 aa)). Intrachain disulfides connect cysteine 455/cysteine 525, cysteine 475/cysteine 524, and cysteine 484/cysteine 507. Asparagine 531 carries an N-linked (GlcNAc...) asparagine glycan. Intrachain disulfides connect cysteine 532-cysteine 599, cysteine 550-cysteine 598, cysteine 560-cysteine 586, cysteine 606-cysteine 677, cysteine 624-cysteine 676, and cysteine 633-cysteine 652. Residue serine 686 is modified to Phosphoserine.

It belongs to the peptidase S8 family. In terms of assembly, monomer. Can self-associate to form dimers and higher multimers which may have increased LDLR degrading activity. The precursor protein but not the mature protein may form multimers. Interacts with APOB, VLDLR, LRP8/APOER2 and BACE1. The full-length immature form (pro-PCSK9) interacts with SCNN1A, SCNN1B and SCNN1G. The pro-PCSK9 form (via C-terminal domain) interacts with LDLR. Interacts (via the C-terminal domain) with ANXA2 (via repeat Annexin 1); the interaction inhibits the degradation of LDLR. Requires Ca(2+) as cofactor. Cleavage by furin and PCSK5 generates a truncated inactive protein that is unable to induce LDLR degradation. Post-translationally, undergoes autocatalytic cleavage in the endoplasmic reticulum to release the propeptide from the N-terminus and the cleavage of the propeptide is strictly required for its maturation and activation. The cleaved propeptide however remains associated with the catalytic domain through non-covalent interactions, preventing potential substrates from accessing its active site. As a result, it is secreted from cells as a propeptide-containing, enzymatically inactive protein. In terms of processing, phosphorylation protects the propeptide against proteolysis.

The protein resides in the cytoplasm. It is found in the secreted. Its subcellular location is the endosome. The protein localises to the lysosome. It localises to the cell surface. The protein resides in the endoplasmic reticulum. It is found in the golgi apparatus. Its proteolytic activity is autoinhibited by the non-covalent binding of the propeptide to the catalytic domain. Inhibited by EGTA. Its function is as follows. Crucial player in the regulation of plasma cholesterol homeostasis. Binds to low-density lipid receptor family members: low density lipoprotein receptor (LDLR), very low density lipoprotein receptor (VLDLR), apolipoprotein E receptor (LRP1/APOER) and apolipoprotein receptor 2 (LRP8/APOER2), and promotes their degradation in intracellular acidic compartments. Acts via a non-proteolytic mechanism to enhance the degradation of the hepatic LDLR through a clathrin LDLRAP1/ARH-mediated pathway. May prevent the recycling of LDLR from endosomes to the cell surface or direct it to lysosomes for degradation. Can induce ubiquitination of LDLR leading to its subsequent degradation. Inhibits intracellular degradation of APOB via the autophagosome/lysosome pathway in a LDLR-independent manner. Involved in the disposal of non-acetylated intermediates of BACE1 in the early secretory pathway. Inhibits epithelial Na(+) channel (ENaC)-mediated Na(+) absorption by reducing ENaC surface expression primarily by increasing its proteasomal degradation. Regulates neuronal apoptosis via modulation of LRP8/APOER2 levels and related anti-apoptotic signaling pathways. The chain is Proprotein convertase subtilisin/kexin type 9 (PCSK9) from Lagothrix lagotricha (Brown woolly monkey).